Consider the following 192-residue polypeptide: Probable thymidylate kinase (192 aa).

7 to 14 (GIDGAGKS) lines the ATP pocket.

This sequence belongs to the thymidylate kinase family.

The enzyme catalyses dTMP + ATP = dTDP + ADP. The chain is Probable thymidylate kinase from Methanobrevibacter smithii (strain ATCC 35061 / DSM 861 / OCM 144 / PS).